A 540-amino-acid polypeptide reads, in one-letter code: DNA topoisomerase 1 (540 aa).

The region spanning 1–110 is the Toprim domain; the sequence is MELFIVESPT…NIKRAVFYEI (110 aa). The Mg(2+) site is built by E7 and D79. The Topo IA-type catalytic domain occupies 126–536; that stretch reads NMNLVYAQFA…FMEKIFGKEL (411 aa). The interval 161–166 is interaction with DNA; it reads SAGRVQ. The active-site O-(5'-phospho-DNA)-tyrosine intermediate is the Y281.

Belongs to the type IA topoisomerase family. Monomer. Requires Mg(2+) as cofactor.

The catalysed reaction is ATP-independent breakage of single-stranded DNA, followed by passage and rejoining.. Functionally, releases the supercoiling and torsional tension of DNA, which is introduced during the DNA replication and transcription, by transiently cleaving and rejoining one strand of the DNA duplex. Introduces a single-strand break via transesterification at a target site in duplex DNA. The scissile phosphodiester is attacked by the catalytic tyrosine of the enzyme, resulting in the formation of a DNA-(5'-phosphotyrosyl)-enzyme intermediate and the expulsion of a 3'-OH DNA strand. The free DNA strand then undergoes passage around the unbroken strand, thus removing DNA supercoils. Finally, in the religation step, the DNA 3'-OH attacks the covalent intermediate to expel the active-site tyrosine and restore the DNA phosphodiester backbone. In Aquifex aeolicus (strain VF5), this protein is DNA topoisomerase 1.